A 307-amino-acid polypeptide reads, in one-letter code: Porphobilinogen deaminase (307 aa).

Cys-241 carries the S-(dipyrrolylmethanemethyl)cysteine modification.

It belongs to the HMBS family. As to quaternary structure, monomer. Requires dipyrromethane as cofactor.

The catalysed reaction is 4 porphobilinogen + H2O = hydroxymethylbilane + 4 NH4(+). The protein operates within porphyrin-containing compound metabolism; protoporphyrin-IX biosynthesis; coproporphyrinogen-III from 5-aminolevulinate: step 2/4. Functionally, tetrapolymerization of the monopyrrole PBG into the hydroxymethylbilane pre-uroporphyrinogen in several discrete steps. The sequence is that of Porphobilinogen deaminase from Macrococcus caseolyticus (strain JCSC5402) (Macrococcoides caseolyticum).